Consider the following 239-residue polypeptide: Putative transcriptional regulator of 2-aminoethylphosphonate degradation operons (239 aa).

The 69-residue stretch at 8 to 76 folds into the HTH gntR-type domain; the sequence is IPQYLLIKAQ…DRRGWFVTPE (69 aa). The segment at residues 36 to 55 is a DNA-binding region (H-T-H motif); it reads ERELCAIFNTTRITIRESLA.

In Salmonella paratyphi A (strain ATCC 9150 / SARB42), this protein is Putative transcriptional regulator of 2-aminoethylphosphonate degradation operons (phnR).